The primary structure comprises 408 residues: uncharacterized protein (408 aa).

Residues 49-77 (PRSSPEVQRKATAGENSEVGSPESSLSTS) form a disordered region. A compositionally biased stretch (polar residues) spans 62 to 77 (GENSEVGSPESSLSTS). The region spanning 124 to 170 (SFEFMQLPDTDICQIMSFLDAQSLLNLSQTCSHLRQLCLAHEDNAGK) is the F-box domain.

This is an uncharacterized protein from Caenorhabditis elegans.